The following is a 294-amino-acid chain: Ribosomal protein L11 methyltransferase (294 aa).

Residues Thr147, Gly169, Asp191, and Asn231 each contribute to the S-adenosyl-L-methionine site.

Belongs to the methyltransferase superfamily. PrmA family.

It is found in the cytoplasm. It carries out the reaction L-lysyl-[protein] + 3 S-adenosyl-L-methionine = N(6),N(6),N(6)-trimethyl-L-lysyl-[protein] + 3 S-adenosyl-L-homocysteine + 3 H(+). Its function is as follows. Methylates ribosomal protein L11. This chain is Ribosomal protein L11 methyltransferase, found in Dichelobacter nodosus (strain VCS1703A).